A 304-amino-acid polypeptide reads, in one-letter code: Phosphoribosylaminoimidazole-succinocarboxamide synthase (304 aa).

This sequence belongs to the SAICAR synthetase family.

It catalyses the reaction 5-amino-1-(5-phospho-D-ribosyl)imidazole-4-carboxylate + L-aspartate + ATP = (2S)-2-[5-amino-1-(5-phospho-beta-D-ribosyl)imidazole-4-carboxamido]succinate + ADP + phosphate + 2 H(+). It participates in purine metabolism; IMP biosynthesis via de novo pathway; 5-amino-1-(5-phospho-D-ribosyl)imidazole-4-carboxamide from 5-amino-1-(5-phospho-D-ribosyl)imidazole-4-carboxylate: step 1/2. This is Phosphoribosylaminoimidazole-succinocarboxamide synthase from Streptomyces griseus subsp. griseus (strain JCM 4626 / CBS 651.72 / NBRC 13350 / KCC S-0626 / ISP 5235).